Consider the following 319-residue polypeptide: tRNA uridine(34) hydroxylase (319 aa).

In terms of domain architecture, Rhodanese spans 124–218 (LDEDTVILDA…YGKNEETKGE (95 aa)). C178 (cysteine persulfide intermediate) is an active-site residue.

The protein belongs to the TrhO family.

It catalyses the reaction uridine(34) in tRNA + AH2 + O2 = 5-hydroxyuridine(34) in tRNA + A + H2O. Functionally, catalyzes oxygen-dependent 5-hydroxyuridine (ho5U) modification at position 34 in tRNAs. The chain is tRNA uridine(34) hydroxylase from Listeria monocytogenes serotype 4b (strain CLIP80459).